Here is a 296-residue protein sequence, read N- to C-terminus: 4-hydroxybenzoate octaprenyltransferase (296 aa).

Helical transmembrane passes span 28-48 (PIGIYLLLWPTLWAVWIAGKG), 52-72 (LNTVFIFVAGVFLMRAAGCVI), 102-122 (ALVLFAVLVSLSFVLVLFTNS), 123-140 (TTIWLSFGGLALAACYPF), 146-166 (YYPQVVLGAAFSWGMPMAFTA), 169-189 (GELPAAAWLLYIANLLWTVGY), 219-239 (VIILSLQGLALGCLALAGSRF), 241-261 (LGAFFYMGLLVAAACFAWEFW), and 275-295 (FLHNHWAGLAIFLGIVADYAL).

This sequence belongs to the UbiA prenyltransferase family. It depends on Mg(2+) as a cofactor.

Its subcellular location is the cell inner membrane. It carries out the reaction all-trans-octaprenyl diphosphate + 4-hydroxybenzoate = 4-hydroxy-3-(all-trans-octaprenyl)benzoate + diphosphate. It functions in the pathway cofactor biosynthesis; ubiquinone biosynthesis. Its function is as follows. Catalyzes the prenylation of para-hydroxybenzoate (PHB) with an all-trans polyprenyl group. Mediates the second step in the final reaction sequence of ubiquinone-8 (UQ-8) biosynthesis, which is the condensation of the polyisoprenoid side chain with PHB, generating the first membrane-bound Q intermediate 3-octaprenyl-4-hydroxybenzoate. The polypeptide is 4-hydroxybenzoate octaprenyltransferase (Pseudomonas syringae pv. tomato (strain ATCC BAA-871 / DC3000)).